The sequence spans 377 residues: Lipoyl synthase, mitochondrial (377 aa).

Residues cysteine 103, cysteine 108, cysteine 114, cysteine 134, cysteine 138, cysteine 141, and serine 349 each contribute to the [4Fe-4S] cluster site. The Radical SAM core domain maps to 119 to 338 (EHGTQTATIM…EERGNELGFL (220 aa)).

The protein belongs to the radical SAM superfamily. Lipoyl synthase family. The cofactor is [4Fe-4S] cluster.

The protein localises to the mitochondrion. It carries out the reaction [[Fe-S] cluster scaffold protein carrying a second [4Fe-4S](2+) cluster] + N(6)-octanoyl-L-lysyl-[protein] + 2 oxidized [2Fe-2S]-[ferredoxin] + 2 S-adenosyl-L-methionine + 4 H(+) = [[Fe-S] cluster scaffold protein] + N(6)-[(R)-dihydrolipoyl]-L-lysyl-[protein] + 4 Fe(3+) + 2 hydrogen sulfide + 2 5'-deoxyadenosine + 2 L-methionine + 2 reduced [2Fe-2S]-[ferredoxin]. It participates in protein modification; protein lipoylation via endogenous pathway; protein N(6)-(lipoyl)lysine from octanoyl-[acyl-carrier-protein]: step 2/2. Its function is as follows. Catalyzes the radical-mediated insertion of two sulfur atoms into the C-6 and C-8 positions of the octanoyl moiety bound to the lipoyl domains of lipoate-dependent enzymes, thereby converting the octanoylated domains into lipoylated derivatives. The sequence is that of Lipoyl synthase, mitochondrial from Drosophila melanogaster (Fruit fly).